Reading from the N-terminus, the 191-residue chain is Protein GrpE (191 aa).

A disordered region spans residues 1–49 (MSEEKQTAEQVEAAEQEEVTEQAEQAASQEQHEETAGQEEALQHQIDEL). Residues 12–21 (EAAEQEEVTE) show a composition bias toward acidic residues. The segment covering 30–49 (EQHEETAGQEEALQHQIDEL) has biased composition (basic and acidic residues).

This sequence belongs to the GrpE family. Homodimer.

It is found in the cytoplasm. Functionally, participates actively in the response to hyperosmotic and heat shock by preventing the aggregation of stress-denatured proteins, in association with DnaK and GrpE. It is the nucleotide exchange factor for DnaK and may function as a thermosensor. Unfolded proteins bind initially to DnaJ; upon interaction with the DnaJ-bound protein, DnaK hydrolyzes its bound ATP, resulting in the formation of a stable complex. GrpE releases ADP from DnaK; ATP binding to DnaK triggers the release of the substrate protein, thus completing the reaction cycle. Several rounds of ATP-dependent interactions between DnaJ, DnaK and GrpE are required for fully efficient folding. This chain is Protein GrpE, found in Bacillus velezensis (strain DSM 23117 / BGSC 10A6 / LMG 26770 / FZB42) (Bacillus amyloliquefaciens subsp. plantarum).